The sequence spans 238 residues: Uridylate kinase (238 aa).

12 to 15 (KVSG) lines the ATP pocket. Residue G54 participates in UMP binding. Residues G55 and R59 each contribute to the ATP site. Residues D74 and 135–142 (TGNPYFTT) each bind UMP. Residues T162, N163, Y168, and D171 each contribute to the ATP site.

It belongs to the UMP kinase family. Homohexamer.

Its subcellular location is the cytoplasm. It catalyses the reaction UMP + ATP = UDP + ADP. Its pathway is pyrimidine metabolism; CTP biosynthesis via de novo pathway; UDP from UMP (UMPK route): step 1/1. Inhibited by UTP. Catalyzes the reversible phosphorylation of UMP to UDP. This Azorhizobium caulinodans (strain ATCC 43989 / DSM 5975 / JCM 20966 / LMG 6465 / NBRC 14845 / NCIMB 13405 / ORS 571) protein is Uridylate kinase.